A 31-amino-acid chain; its full sequence is Photosystem II reaction center protein M (31 aa).

The chain crosses the membrane as a helical span at residues 5–25; sequence ILAFIATALLILVPTAFLLII.

It belongs to the PsbM family. As to quaternary structure, PSII is composed of 1 copy each of membrane proteins PsbA, PsbB, PsbC, PsbD, PsbE, PsbF, PsbH, PsbI, PsbJ, PsbK, PsbL, PsbM, PsbT, PsbX, PsbY, PsbZ, Psb30/Ycf12, at least 3 peripheral proteins of the oxygen-evolving complex and a large number of cofactors. It forms dimeric complexes.

The protein resides in the plastid membrane. Functionally, one of the components of the core complex of photosystem II (PSII). PSII is a light-driven water:plastoquinone oxidoreductase that uses light energy to abstract electrons from H(2)O, generating O(2) and a proton gradient subsequently used for ATP formation. It consists of a core antenna complex that captures photons, and an electron transfer chain that converts photonic excitation into a charge separation. This subunit is found at the monomer-monomer interface. The sequence is that of Photosystem II reaction center protein M from Cuscuta exaltata (Tall dodder).